Reading from the N-terminus, the 375-residue chain is B3 domain-containing protein REM-like 2 (375 aa).

DNA-binding regions (TF-B3) lie at residues 51 to 147 (SFVA…KRLY), 131 to 226 (FVTV…YGTN), and 277 to 375 (RLVI…KSGK).

The protein resides in the nucleus. The sequence is that of B3 domain-containing protein REM-like 2 from Arabidopsis thaliana (Mouse-ear cress).